The primary structure comprises 28 residues: 50 kDa venom protease (28 aa).

It belongs to the venom metalloproteinase (M12B) family. Zn(2+) is required as a cofactor. In terms of tissue distribution, expressed by the venom gland.

It is found in the secreted. The polypeptide is 50 kDa venom protease (Proatheris superciliaris (Lowland swamp viper)).